Reading from the N-terminus, the 163-residue chain is 3-isopropylmalate dehydratase small subunit 2 (163 aa).

Belongs to the LeuD family. LeuD type 2 subfamily. Heterodimer of LeuC and LeuD.

The enzyme catalyses (2R,3S)-3-isopropylmalate = (2S)-2-isopropylmalate. Its pathway is amino-acid biosynthesis; L-leucine biosynthesis; L-leucine from 3-methyl-2-oxobutanoate: step 2/4. Its function is as follows. Catalyzes the isomerization between 2-isopropylmalate and 3-isopropylmalate, via the formation of 2-isopropylmaleate. The sequence is that of 3-isopropylmalate dehydratase small subunit 2 (leuD2) from Pyrococcus abyssi (strain GE5 / Orsay).